The following is a 220-amino-acid chain: Ribosome maturation factor RimM (220 aa).

One can recognise a PRC barrel domain in the interval glutamate 143–tyrosine 220.

This sequence belongs to the RimM family. In terms of assembly, binds ribosomal protein uS19.

It localises to the cytoplasm. In terms of biological role, an accessory protein needed during the final step in the assembly of 30S ribosomal subunit, possibly for assembly of the head region. Essential for efficient processing of 16S rRNA. May be needed both before and after RbfA during the maturation of 16S rRNA. It has affinity for free ribosomal 30S subunits but not for 70S ribosomes. This Cupriavidus metallidurans (strain ATCC 43123 / DSM 2839 / NBRC 102507 / CH34) (Ralstonia metallidurans) protein is Ribosome maturation factor RimM.